The sequence spans 439 residues: S-layer protein (439 aa).

The N-terminal stretch at 1–30 (MKKNLRIVSAAAAALLAVAPIAATAMPVNA) is a signal peptide.

In terms of processing, glycosylated.

Its subcellular location is the secreted. The protein resides in the cell wall. It is found in the S-layer. The S-layer is a paracrystalline mono-layered assembly of proteins which coat the surface of bacteria. The chain is S-layer protein (slpH) from Lactobacillus helveticus (Lactobacillus suntoryeus).